Consider the following 137-residue polypeptide: Large ribosomal subunit protein uL16 (137 aa).

The interval 1–22 (MLQPKRTKFRKVQKGRNRGLAH) is disordered.

This sequence belongs to the universal ribosomal protein uL16 family. As to quaternary structure, part of the 50S ribosomal subunit.

Functionally, binds 23S rRNA and is also seen to make contacts with the A and possibly P site tRNAs. The sequence is that of Large ribosomal subunit protein uL16 from Chromohalobacter salexigens (strain ATCC BAA-138 / DSM 3043 / CIP 106854 / NCIMB 13768 / 1H11).